The primary structure comprises 177 residues: MAELATVARPYAEALYQVARQGDVAVWVEQVSALAQVAENAELRQFAGSPKVSAEQVYDVVAAAAGVSLSTGVQHFLRTVIDNGRLAVLPAIAVQFNALVNAASGVADAAIFSAYPIEPAQLAEVVAALEQRFGRKLSVNVTLEPELIGGIRVVVGDEVLDTSVKARLERMKVALSA.

The protein belongs to the ATPase delta chain family. In terms of assembly, F-type ATPases have 2 components, F(1) - the catalytic core - and F(0) - the membrane proton channel. F(1) has five subunits: alpha(3), beta(3), gamma(1), delta(1), epsilon(1). F(0) has three main subunits: a(1), b(2) and c(10-14). The alpha and beta chains form an alternating ring which encloses part of the gamma chain. F(1) is attached to F(0) by a central stalk formed by the gamma and epsilon chains, while a peripheral stalk is formed by the delta and b chains.

The protein localises to the cell inner membrane. Its function is as follows. F(1)F(0) ATP synthase produces ATP from ADP in the presence of a proton or sodium gradient. F-type ATPases consist of two structural domains, F(1) containing the extramembraneous catalytic core and F(0) containing the membrane proton channel, linked together by a central stalk and a peripheral stalk. During catalysis, ATP synthesis in the catalytic domain of F(1) is coupled via a rotary mechanism of the central stalk subunits to proton translocation. Functionally, this protein is part of the stalk that links CF(0) to CF(1). It either transmits conformational changes from CF(0) to CF(1) or is implicated in proton conduction. In Leptothrix cholodnii (strain ATCC 51168 / LMG 8142 / SP-6) (Leptothrix discophora (strain SP-6)), this protein is ATP synthase subunit delta.